Here is a 142-residue protein sequence, read N- to C-terminus: Bacilliredoxin ABC2448 (142 aa).

Belongs to the bacilliredoxin family.

The chain is Bacilliredoxin ABC2448 from Shouchella clausii (strain KSM-K16) (Alkalihalobacillus clausii).